A 418-amino-acid chain; its full sequence is Metacaspase-2 (418 aa).

The tract at residues 68 to 113 (PSPYTHAPHAPSPFNHAPPDSYPFTHAPPASSPFNHAPPGPPPPVH) is disordered. Low complexity predominate over residues 70–80 (PYTHAPHAPSP). A compositionally biased stretch (pro residues) spans 103-112 (HAPPGPPPPV). Catalysis depends on residues H200 and C256. A disordered region spans residues 385–406 (PDEEEEVNQAPQKTQEPQLSAN). The segment covering 393-405 (QAPQKTQEPQLSA) has biased composition (polar residues).

The protein belongs to the peptidase C14B family.

In terms of biological role, acts as a negative regulator of oxidative stress cell death and hypersensitive cell death response mediated by immune response. Acts via indirect or direct regulation of AMC1 at postranscriptional level. The polypeptide is Metacaspase-2 (AMC2) (Arabidopsis thaliana (Mouse-ear cress)).